Reading from the N-terminus, the 202-residue chain is Peroxynitrite isomerase (202 aa).

Positions 21 to 27 match the GXWXGXG motif; sequence GEWEGRG. Histidine 193 is a heme b binding site.

Belongs to the nitrobindin family. In terms of assembly, homodimer. Requires heme b as cofactor.

It carries out the reaction peroxynitrite = nitrate. The protein operates within nitrogen metabolism. Functionally, heme-binding protein able to scavenge peroxynitrite and to protect free L-tyrosine against peroxynitrite-mediated nitration, by acting as a peroxynitrite isomerase that converts peroxynitrite to nitrate. Therefore, this protein likely plays a role in peroxynitrite sensing and in the detoxification of reactive nitrogen and oxygen species (RNS and ROS, respectively). Is able to bind nitric oxide (NO) in vitro, but may act as a sensor of peroxynitrite levels in vivo. The polypeptide is Peroxynitrite isomerase (Pseudarthrobacter chlorophenolicus (strain ATCC 700700 / DSM 12829 / CIP 107037 / JCM 12360 / KCTC 9906 / NCIMB 13794 / A6) (Arthrobacter chlorophenolicus)).